The following is a 68-amino-acid chain: Antimicrobial peptide UyCT5 (68 aa).

The signal sequence occupies residues 1–23 (MKNQFAILLLAVVFLQLISQSDA). L36 carries the post-translational modification Leucine amide. A propeptide spanning residues 40-68 (GLKNADRLDELFDGDISDADLDFLRELMR) is cleaved from the precursor.

It belongs to the non-disulfide-bridged peptide (NDBP) superfamily. Short antimicrobial peptide (group 4) family. As to expression, expressed by the venom gland.

It localises to the secreted. It is found in the target cell membrane. Antimicrobial peptide that inhibits the growth of Gram-positive (S.aureus, MIC=1 uM) and Gram-negative bacteria (E.coli, MIC=15 uM and P.aeruginosa, MIC=2 uM). It also shows 37% of hemolysis when 15 uM are tested (93% at 50 uM). This Urodacus yaschenkoi (Inland robust scorpion) protein is Antimicrobial peptide UyCT5.